A 377-amino-acid chain; its full sequence is Alanine racemase (377 aa).

The Proton acceptor; specific for D-alanine role is filled by K33. K33 carries the N6-(pyridoxal phosphate)lysine modification. R134 lines the substrate pocket. Y267 functions as the Proton acceptor; specific for L-alanine in the catalytic mechanism. M315 contacts substrate.

Belongs to the alanine racemase family. The cofactor is pyridoxal 5'-phosphate.

It catalyses the reaction L-alanine = D-alanine. It functions in the pathway amino-acid biosynthesis; D-alanine biosynthesis; D-alanine from L-alanine: step 1/1. Its function is as follows. Catalyzes the interconversion of L-alanine and D-alanine. May also act on other amino acids. In Treponema pallidum subsp. pallidum (strain SS14), this protein is Alanine racemase (alr).